Consider the following 498-residue polypeptide: ATP synthase subunit beta, chloroplastic (498 aa).

172-179 is an ATP binding site; it reads GGAGVGKT.

This sequence belongs to the ATPase alpha/beta chains family. As to quaternary structure, F-type ATPases have 2 components, CF(1) - the catalytic core - and CF(0) - the membrane proton channel. CF(1) has five subunits: alpha(3), beta(3), gamma(1), delta(1), epsilon(1). CF(0) has four main subunits: a(1), b(1), b'(1) and c(9-12).

It is found in the plastid. Its subcellular location is the chloroplast thylakoid membrane. The enzyme catalyses ATP + H2O + 4 H(+)(in) = ADP + phosphate + 5 H(+)(out). Produces ATP from ADP in the presence of a proton gradient across the membrane. The catalytic sites are hosted primarily by the beta subunits. This is ATP synthase subunit beta, chloroplastic from Eucalyptus globulus subsp. globulus (Tasmanian blue gum).